The following is a 387-amino-acid chain: 3-ketoacyl-CoA thiolase (387 aa).

Catalysis depends on C91, which acts as the Acyl-thioester intermediate. Residues H343 and C373 each act as proton acceptor in the active site.

It belongs to the thiolase-like superfamily. Thiolase family. Heterotetramer of two alpha chains (FadB) and two beta chains (FadA).

The protein localises to the cytoplasm. The enzyme catalyses an acyl-CoA + acetyl-CoA = a 3-oxoacyl-CoA + CoA. It functions in the pathway lipid metabolism; fatty acid beta-oxidation. Functionally, catalyzes the final step of fatty acid oxidation in which acetyl-CoA is released and the CoA ester of a fatty acid two carbons shorter is formed. This Shewanella oneidensis (strain ATCC 700550 / JCM 31522 / CIP 106686 / LMG 19005 / NCIMB 14063 / MR-1) protein is 3-ketoacyl-CoA thiolase.